We begin with the raw amino-acid sequence, 457 residues long: Carboxypeptidase N catalytic chain (457 aa).

Residues 1-23 (MPDLPSAFLPLLLLSKFVTPVTF) form the signal peptide. The Peptidase M14 domain maps to 24 to 338 (RHHRYDDLVR…EALIQFLEQV (315 aa)). The cysteines at positions 42 and 104 are disulfide-linked. Zn(2+) contacts are provided by H86, E89, and H216. The cysteines at positions 271 and 311 are disulfide-linked. E308 serves as the catalytic Proton donor/acceptor. T400, T402, and T409 each carry an O-linked (GalNAc...) threonine glycan. The tract at residues 418–457 (SSSQVYPVQRAPGRGQGGRAKQPRTSRKKDPATKRHRGPA) is disordered.

The protein belongs to the peptidase M14 family. Tetramer of two catalytic chains and two glycosylated inactive chains. Zn(2+) serves as cofactor. Mainly expressed in liver. Also detected in lung, stomach, intestine, spleen and kidney.

It is found in the secreted. The protein resides in the extracellular space. The catalysed reaction is Release of a C-terminal basic amino acid, preferentially lysine.. Functionally, protects the body from potent vasoactive and inflammatory peptides containing C-terminal Arg or Lys (such as kinins or anaphylatoxins) which are released into the circulation. The chain is Carboxypeptidase N catalytic chain (Cpn1) from Mus musculus (Mouse).